Consider the following 273-residue polypeptide: Type IV secretion system protein PtlF homolog (273 aa).

The N-terminal stretch at 1-20 (MMAARMMAAGLAATALSAHA) is a signal peptide.

The protein belongs to the TrbG/VirB9 family.

It is found in the cell outer membrane. This chain is Type IV secretion system protein PtlF homolog (ptlF), found in Bordetella bronchiseptica (strain ATCC BAA-588 / NCTC 13252 / RB50) (Alcaligenes bronchisepticus).